The following is a 192-amino-acid chain: Adenylate kinase (192 aa).

Residue 10–18 (GVPGVGGTT) participates in ATP binding.

The protein belongs to the archaeal adenylate kinase family. Monomer.

Its subcellular location is the cytoplasm. The catalysed reaction is AMP + ATP = 2 ADP. The protein is Adenylate kinase of Methanococcus maripaludis (strain C6 / ATCC BAA-1332).